Reading from the N-terminus, the 378-residue chain is Putative F-box protein At5g51000 (378 aa).

An F-box domain is found at 1-47 (MSTMSDLFPDLVEEILSRVPITSLKAVKLTCKQWNDLSKDSSFTKNH).

This is Putative F-box protein At5g51000 from Arabidopsis thaliana (Mouse-ear cress).